The following is a 236-amino-acid chain: Small ribosomal subunit protein uS2c (236 aa).

It belongs to the universal ribosomal protein uS2 family.

The protein localises to the plastid. The protein resides in the chloroplast. The polypeptide is Small ribosomal subunit protein uS2c (rps2) (Triticum aestivum (Wheat)).